The primary structure comprises 920 residues: GTPase activating protein homolog 1 (920 aa).

Residues 65 to 87 (NLGGLSNDSTNNNSNSNNTIDSS) are compositionally biased toward low complexity. Residues 65–91 (NLGGLSNDSTNNNSNSNNTIDSSKPLS) form a disordered region. Residues 90 to 344 (LSFENDMSDG…FVDIIDPEVD (255 aa)) enclose the F-BAR domain. The stretch at 184–276 (LNEAIKDMEK…EDEYKEQINE (93 aa)) forms a coiled coil. Residues 403–449 (TNTITSQSGSTIISNGASQPIEIPSPQPISEQQQIPPQQQQQQQQAQ) show a composition bias toward low complexity. Disordered stretches follow at residues 403–468 (TNTI…PMGR) and 490–518 (STSSLLTKDGNSTTSSNTSTSNSNQLSKS). The segment covering 450 to 468 (VPPTSINQSSSPPVNPMGR) has biased composition (polar residues). Low complexity predominate over residues 490 to 513 (STSSLLTKDGNSTTSSNTSTSNSN). The Rho-GAP domain maps to 533 to 716 (VELEVLIEND…NMIIDSLETK (184 aa)). Residues 727 to 836 (PIIPDDENSD…VSSNGNNINS (110 aa)) are disordered. Residues 730–741 (PDDENSDDDDDD) show a composition bias toward acidic residues. A compositionally biased stretch (low complexity) spans 757-836 (NDINTTNINN…VSSNGNNINS (80 aa)).

The protein resides in the cytoplasm. It localises to the contractile vacuole. Rho GTPase-activating protein involved in the signal transduction pathway. Regulator of the contractile vacuole network as well as involved in driving vacuole emptying. This is GTPase activating protein homolog 1 (mgp1) from Dictyostelium discoideum (Social amoeba).